Consider the following 299-residue polypeptide: Homoserine kinase (299 aa).

Position 84 to 94 (84 to 94 (PISRGLGSSSA)) interacts with ATP.

Belongs to the GHMP kinase family. Homoserine kinase subfamily.

It is found in the cytoplasm. The catalysed reaction is L-homoserine + ATP = O-phospho-L-homoserine + ADP + H(+). The protein operates within amino-acid biosynthesis; L-threonine biosynthesis; L-threonine from L-aspartate: step 4/5. Catalyzes the ATP-dependent phosphorylation of L-homoserine to L-homoserine phosphate. This Helicobacter hepaticus (strain ATCC 51449 / 3B1) protein is Homoserine kinase.